We begin with the raw amino-acid sequence, 144 residues long: Protein cornichon homolog 1 (144 aa).

The Cytoplasmic portion of the chain corresponds to 1-10 (MAFTFAAFCY). A helical membrane pass occupies residues 11–31 (MLALLLTATLIFFAIWHIIAF). Residues 32 to 56 (DELKTDYKNPIDQCNTLNPLVLPEY) are Lumenal-facing. The chain crosses the membrane as a helical span at residues 57–77 (LIHAFFCVMFLCAAEWLTLGL). Residues 78-122 (NMPLLAYHIWRYMSRPVMSGPGLYDPTTIMNADILAYCQKEGWCK) are Cytoplasmic-facing. Residues 123–143 (LAFYLLAFFYYLYGMIYVLVS) traverse the membrane as a helical segment. Residue Ser-144 is a topological domain, lumenal.

It belongs to the cornichon family. Interacts with AREG immature precursor and with immature TGFA, i.e. with a prosegment and lacking full N-glycosylation, but not with the fully N-glycosylated form. In the Golgi apparatus, may form a complex with GORASP55 and transmembrane TGFA.

It is found in the endoplasmic reticulum membrane. It localises to the golgi apparatus membrane. Involved in the selective transport and maturation of TGF-alpha family proteins. In Pongo abelii (Sumatran orangutan), this protein is Protein cornichon homolog 1 (CNIH1).